We begin with the raw amino-acid sequence, 343 residues long: Dipeptide transport system permease protein DppC (343 aa).

The next 5 membrane-spanning stretches (helical) occupy residues 44-64, 144-164, 195-215, 259-279, and 309-329; these read LVAM…AFVV, LIIA…YGII, LALL…LFAW, GVIV…EAVL, and FQLI…IFFG. The ABC transmembrane type-1 domain occupies 140–329; the sequence is LRISLIIALA…VLSLTFIFFG (190 aa).

The protein belongs to the binding-protein-dependent transport system permease family. OppBC subfamily. As to quaternary structure, the complex is composed of two ATP-binding proteins (DppD and DppF), two transmembrane proteins (DppB and DppC) and a solute-binding protein (DppA).

The protein localises to the cell membrane. Part of the ABC transporter DppABCDF involved in dipeptide transport. Responsible for the translocation of the substrate across the membrane. This Lactococcus lactis subsp. cremoris (strain MG1363) protein is Dipeptide transport system permease protein DppC.